The primary structure comprises 134 residues: Fluoride-specific ion channel FluC 3 (134 aa).

Helical transmembrane passes span 4–24 (LIIL…FIML), 35–55 (MDIF…TSFF), 67–87 (MVGT…FGAV), and 100–120 (ICYL…GLMI). Na(+) is bound by residues Gly-74 and Ser-77.

It belongs to the fluoride channel Fluc/FEX (TC 1.A.43) family.

The protein localises to the cell inner membrane. The enzyme catalyses fluoride(in) = fluoride(out). With respect to regulation, na(+) is not transported, but it plays an essential structural role and its presence is essential for fluoride channel function. Functionally, fluoride-specific ion channel. Important for reducing fluoride concentration in the cell, thus reducing its toxicity. The protein is Fluoride-specific ion channel FluC 3 of Yersinia pseudotuberculosis serotype I (strain IP32953).